Here is a 371-residue protein sequence, read N- to C-terminus: Vasopressin V2 receptor (371 aa).

The interval 1–30 (MLMASTTSAVPGHPSLPSLPSNSSQERPLD) is disordered. At 1–38 (MLMASTTSAVPGHPSLPSLPSNSSQERPLDTRDPLLAR) the chain is on the extracellular side. Residues 15-24 (SLPSLPSNSS) show a composition bias toward low complexity. Residue Asn-22 is glycosylated (N-linked (GlcNAc...) asparagine). A helical transmembrane segment spans residues 39–63 (AELALLSIVFVAVALSNGLVLAALA). Residues 64–77 (RRGRRGHWAPIHVF) are Cytoplasmic-facing. A helical transmembrane segment spans residues 78 to 98 (IGHLCLADLAVALFQVLPQLA). Residues 99 to 113 (WKATDRFRGPDALCR) are Extracellular-facing. A helical membrane pass occupies residues 114–135 (AVKYLQMVGMYASSYMILAMTL). Residues 136 to 159 (DRHRAICRPMLAYRHGSGAHWNRP) are Cytoplasmic-facing. A helical membrane pass occupies residues 160–180 (VLVAWAFSLLLSLPQLFIFAQ). The Extracellular portion of the chain corresponds to 181-200 (RNVEGGSGVTDCWACFAEPW). Residues 201–220 (GRRTYVTWIALMVFVAPTLG) form a helical membrane-spanning segment. The Cytoplasmic portion of the chain corresponds to 221–271 (IAACQVLIFREIHASLVPGPSERPGGRRRGRRTGSPGEGAHVSAAVAKTVR). Positions 240 to 259 (PSERPGGRRRGRRTGSPGEG) are disordered. Residues 272 to 293 (MTLVIVVVYVLCWAPFFLVQLW) traverse the membrane as a helical segment. At 294–308 (AAWDPEAPLEGAPFV) the chain is on the extracellular side. A helical transmembrane segment spans residues 309 to 328 (LLMLLASLNSCTNPWIYASF). At 329 to 371 (SSSVSSELRSLLCCARGRTPPSLGPQDESCTTASSSLAKDTSS) the chain is on the cytoplasmic side. S-palmitoyl cysteine attachment occurs at residues Cys-341 and Cys-342. Residues 349–371 (PSLGPQDESCTTASSSLAKDTSS) are disordered. Residues 356-371 (ESCTTASSSLAKDTSS) are compositionally biased toward polar residues.

This sequence belongs to the G-protein coupled receptor 1 family. Vasopressin/oxytocin receptor subfamily. As to quaternary structure, interacts with ARRDC4. Identified in a complex containing at least ARRDC4, V2R and HGS. Interacts with TMEM147. As to expression, kidney.

It localises to the cell membrane. Receptor for arginine vasopressin. The activity of this receptor is mediated by G proteins which activate adenylate cyclase. Involved in renal water reabsorption. This chain is Vasopressin V2 receptor (AVPR2), found in Homo sapiens (Human).